The sequence spans 722 residues: Dynein axonemal intermediate chain 7 (722 aa).

A compositionally biased stretch (basic residues) spans 1 to 15 (MGPKAKKSGSKKKKV). The interval 1–20 (MGPKAKKSGSKKKKVTKAER) is disordered.

Belongs to the DNAI7 family. In terms of assembly, part of the multisubunit axonemal dynein complex formed at least of two heavy chains and a number of intermediate and light chains. Associates with tubulin. Interacts with microtubule. In terms of processing, ubiquitinated. Ubiquitination leads to its degradation through the 26S proteasome. Ubiquitin-proteasome-mediated DNAI7 degradation occurs in mitosis.

The protein resides in the cell projection. It is found in the cilium. It localises to the cytoplasm. Via its association with the multisubunit axonemal dynein complex, is potentially involved in the regulation of cilia function. May act as a cell cycle regulator. The protein is Dynein axonemal intermediate chain 7 of Macaca fascicularis (Crab-eating macaque).